Here is an 853-residue protein sequence, read N- to C-terminus: DNA mismatch repair protein MutS (853 aa).

Residue 613-620 (GPNMGGKS) coordinates ATP.

The protein belongs to the DNA mismatch repair MutS family.

Functionally, this protein is involved in the repair of mismatches in DNA. It is possible that it carries out the mismatch recognition step. This protein has a weak ATPase activity. This chain is DNA mismatch repair protein MutS, found in Vibrio campbellii (strain ATCC BAA-1116).